The sequence spans 252 residues: 2-succinyl-6-hydroxy-2,4-cyclohexadiene-1-carboxylate synthase (252 aa).

It belongs to the AB hydrolase superfamily. MenH family. As to quaternary structure, monomer.

It carries out the reaction 5-enolpyruvoyl-6-hydroxy-2-succinyl-cyclohex-3-ene-1-carboxylate = (1R,6R)-6-hydroxy-2-succinyl-cyclohexa-2,4-diene-1-carboxylate + pyruvate. It participates in quinol/quinone metabolism; 1,4-dihydroxy-2-naphthoate biosynthesis; 1,4-dihydroxy-2-naphthoate from chorismate: step 3/7. Its pathway is quinol/quinone metabolism; menaquinone biosynthesis. Its function is as follows. Catalyzes a proton abstraction reaction that results in 2,5-elimination of pyruvate from 2-succinyl-5-enolpyruvyl-6-hydroxy-3-cyclohexene-1-carboxylate (SEPHCHC) and the formation of 2-succinyl-6-hydroxy-2,4-cyclohexadiene-1-carboxylate (SHCHC). The chain is 2-succinyl-6-hydroxy-2,4-cyclohexadiene-1-carboxylate synthase from Escherichia coli O8 (strain IAI1).